The primary structure comprises 119 residues: MEEPEMQLKGKKVTDKFTESVYVLANEPSVALYRLQEHVRRSLPELAQHKADMQRWEEQSQGAIYTVEYACSAVKNLVDSSVYFRSVEGLLKQAISIRDHMNASAQGHSPEEPPPPSSA.

Residue serine 109 is modified to Phosphoserine.

It belongs to the BORCS8 family. Component of the BLOC-one-related complex (BORC) which is composed of BLOC1S1, BLOC1S2, BORCS5, BORCS6, BORCS7, BORCS8, KXD1 and SNAPIN.

It is found in the lysosome membrane. In terms of biological role, as part of the BLOC-one-related complex (BORC), it plays a role in the movement and localization of lysosomes at the cell periphery. Associated with the cytosolic face of lysosomes, BORC recruits ARL8B to the lysosomal membrane and couples lysosomes to microtubule plus-end-directed kinesin motors, driving lysosome movement toward the cell periphery. This is BLOC-1-related complex subunit 8 from Homo sapiens (Human).